Here is a 435-residue protein sequence, read N- to C-terminus: Methylenetetrahydrofolate--tRNA-(uracil-5-)-methyltransferase TrmFO (435 aa).

10–15 (GAGLAG) contributes to the FAD binding site.

This sequence belongs to the MnmG family. TrmFO subfamily. In terms of assembly, homodimer. The cofactor is FAD.

It is found in the cytoplasm. The enzyme catalyses uridine(54) in tRNA + (6R)-5,10-methylene-5,6,7,8-tetrahydrofolate + NADH + H(+) = 5-methyluridine(54) in tRNA + (6S)-5,6,7,8-tetrahydrofolate + NAD(+). It carries out the reaction uridine(54) in tRNA + (6R)-5,10-methylene-5,6,7,8-tetrahydrofolate + NADPH + H(+) = 5-methyluridine(54) in tRNA + (6S)-5,6,7,8-tetrahydrofolate + NADP(+). Its function is as follows. Catalyzes the folate-dependent formation of 5-methyl-uridine at position 54 (M-5-U54) in all tRNAs. The protein is Methylenetetrahydrofolate--tRNA-(uracil-5-)-methyltransferase TrmFO of Bacillus subtilis (strain 168).